The following is a 64-amino-acid chain: Temporin-ALe (64 aa).

An N-terminal signal peptide occupies residues 1-22 (MFTLKKSLLLLFFLGTINLSLC). Positions 23–47 (EQERNAEEERRDEPDERNAEVEKRF) are excised as a propeptide. Residue Leu-62 is modified to Leucine amide.

In terms of tissue distribution, expressed by the skin glands.

The protein resides in the secreted. Antimicrobial peptide with activity against Gram-positive and Gram-negative bacteria and against fungi. Has been tested against S.aureus (MIC=1.25 ug/mL), B.pumilus (MIC=5.0 ug/mL), B.cereus (MIC=15.0 ug/mL), E.coli (MIC=1.25 ug/mL), B.dysenteriae (MIC=5.0 ug/mL), A.cacoaceticus (MIC=15.0 ug/mL), P.aeruginosa (MIC=5.0 ug/mL) and C.albicans (MIC=1.25 ug/mL). Also shows a weak hemolytic activity. In Amolops loloensis (Lolokou Sucker Frog), this protein is Temporin-ALe.